Here is a 74-residue protein sequence, read N- to C-terminus: uncharacterized protein (74 aa).

This is an uncharacterized protein from Saccharolobus islandicus (Sulfolobus islandicus).